A 190-amino-acid polypeptide reads, in one-letter code: 6,7-dimethyl-8-ribityllumazine synthase (190 aa).

5-amino-6-(D-ribitylamino)uracil contacts are provided by residues W31, 65–67, and 89–91; these read SFE and CVI. 94–95 serves as a coordination point for (2S)-2-hydroxy-3-oxobutyl phosphate; the sequence is ET. H97 serves as the catalytic Proton donor. F122 serves as a coordination point for 5-amino-6-(D-ribitylamino)uracil. (2S)-2-hydroxy-3-oxobutyl phosphate is bound at residue R136.

The protein belongs to the DMRL synthase family.

The enzyme catalyses (2S)-2-hydroxy-3-oxobutyl phosphate + 5-amino-6-(D-ribitylamino)uracil = 6,7-dimethyl-8-(1-D-ribityl)lumazine + phosphate + 2 H2O + H(+). It participates in cofactor biosynthesis; riboflavin biosynthesis; riboflavin from 2-hydroxy-3-oxobutyl phosphate and 5-amino-6-(D-ribitylamino)uracil: step 1/2. Functionally, catalyzes the formation of 6,7-dimethyl-8-ribityllumazine by condensation of 5-amino-6-(D-ribitylamino)uracil with 3,4-dihydroxy-2-butanone 4-phosphate. This is the penultimate step in the biosynthesis of riboflavin. This Flavobacterium johnsoniae (strain ATCC 17061 / DSM 2064 / JCM 8514 / BCRC 14874 / CCUG 350202 / NBRC 14942 / NCIMB 11054 / UW101) (Cytophaga johnsonae) protein is 6,7-dimethyl-8-ribityllumazine synthase.